A 322-amino-acid polypeptide reads, in one-letter code: Formimidoylglutamase (322 aa).

6 residues coordinate Mn(2+): H127, D163, H165, D167, D254, and D256.

The protein belongs to the arginase family. Requires Mn(2+) as cofactor.

The enzyme catalyses N-formimidoyl-L-glutamate + H2O = formamide + L-glutamate. It functions in the pathway amino-acid degradation; L-histidine degradation into L-glutamate; L-glutamate from N-formimidoyl-L-glutamate (hydrolase route): step 1/1. Catalyzes the conversion of N-formimidoyl-L-glutamate to L-glutamate and formamide. This chain is Formimidoylglutamase, found in Paraburkholderia xenovorans (strain LB400).